The primary structure comprises 109 residues: Cell division suppressor protein YneA (109 aa).

One can recognise a LysM domain in the interval 40-94 (STVTITKGDTLWELSNKYHNHHHLTTNEFVKWVEDVNDLNSDTAQSLSPGDKLYI).

Belongs to the YneA family.

It localises to the cytoplasm. Its function is as follows. Inhibits cell division during the SOS response. Affects a later stage of the cell division protein assembly, after the assembly of the Z ring, by probably suppressing recruitment of FtsL and/or DivIC to the division machinery. The protein is Cell division suppressor protein YneA of Priestia megaterium (strain DSM 319 / IMG 1521) (Bacillus megaterium).